Here is a 178-residue protein sequence, read N- to C-terminus: Small ribosomal subunit protein uS7c (178 aa).

Residues 137–146 (QKKEEIEKSK) are compositionally biased toward basic and acidic residues. Positions 137-178 (QKKEEIEKSKSPVNNNKKFISKNKKSKNKKQKKRLKRKKNIY) are disordered. Residues 155–178 (FISKNKKSKNKKQKKRLKRKKNIY) show a composition bias toward basic residues.

It belongs to the universal ribosomal protein uS7 family. As to quaternary structure, part of the 30S ribosomal subunit.

The protein resides in the plastid. One of the primary rRNA binding proteins, it binds directly to 16S rRNA where it nucleates assembly of the head domain of the 30S subunit. The polypeptide is Small ribosomal subunit protein uS7c (rps7) (Euglena longa (Euglenophycean alga)).